The following is a 492-amino-acid chain: Putative sucrose transport protein SUC6 (492 aa).

The interval 1–26 (MSDLQANKDAAAVNRQSSSSSADLNG) is disordered. Topologically, residues 1–33 (MSDLQANKDAAAVNRQSSSSSADLNGPSPMRKM) are cytoplasmic. Residues 14 to 23 (NRQSSSSSAD) are compositionally biased toward polar residues. The residue at position 17 (serine 17) is a Phosphoserine. The chain crosses the membrane as a helical span at residues 34–54 (ISVASIAAGIQFGWALQLSLL). The Extracellular segment spans residues 55–68 (TPYVQLLGVPHKWS). A helical transmembrane segment spans residues 69–89 (SFIWLCGPVSGLLVQPSVGYF). Residues 90–101 (SDRCKSRFGRRR) lie on the Cytoplasmic side of the membrane. The helical transmembrane segment at 102–122 (PFIAMGALLVAVAVVLIGYAA) threads the bilayer. Residues 123–139 (DFGHSMGDKVDEPVKMR) lie on the Extracellular side of the membrane. Residues 140-160 (AVVIFALGFWILDVANNTLQG) traverse the membrane as a helical segment. Residues 161–181 (PCRAFLGDLAAGDAKKTRTAN) lie on the Cytoplasmic side of the membrane. Residues 182–202 (AFFSFFMAVGNVLGYAAGSYT) traverse the membrane as a helical segment. Over 203-224 (NLYKIFPFTMTKACDIYCANLK) the chain is Extracellular. Residues 225–245 (SCFFLSITLLLVVTIIALWYV) traverse the membrane as a helical segment. The Cytoplasmic portion of the chain corresponds to 246–277 (EDKQWSPKADSDNEKTPFFGEIFGAFKVMKRP). Residues 278–298 (MWMLLIVTALNWIAWFPFLLY) traverse the membrane as a helical segment. Residues 299-324 (DTDWMGREVYGGDSKGDDKMKKLYNQ) lie on the Extracellular side of the membrane. The chain crosses the membrane as a helical span at residues 325–345 (GIHVGGLGLMLNSIVLGFMSL). The Cytoplasmic portion of the chain corresponds to 346–359 (GIEGISRKMGGAKR). A helical transmembrane segment spans residues 360-380 (LWGAVNIILAVCLAMTVLVTK). At 381 to 403 (KAEEHRRIAGPMALPTDGIRAGA) the chain is on the extracellular side. A helical transmembrane segment spans residues 404–424 (LTLFALLGIPLAITFSIPFAL). Residues 425–446 (ASIISSSSGAGQGLSLGVLNMT) are Cytoplasmic-facing. Residues 447–467 (IVIPQMVVSFGVGPIDALFGG) form a helical membrane-spanning segment. Over 468-469 (GN) the chain is Extracellular. Residues 470-490 (LPGFVVGAIAAAISSVVAFSV) form a helical membrane-spanning segment. The Cytoplasmic portion of the chain corresponds to 491–492 (LP).

Belongs to the glycoside-pentoside-hexuronide (GPH) cation symporter transporter (TC 2.A.2.4) family.

Its subcellular location is the cell membrane. It functions in the pathway glycan biosynthesis; sucrose metabolism. Functionally, may be responsible for the transport of glucosides into the cell, with the concomitant uptake of protons (symport system). Does not seem to transport sucrose. In Arabidopsis thaliana (Mouse-ear cress), this protein is Putative sucrose transport protein SUC6.